The primary structure comprises 180 residues: Immediate early response gene 2 protein (180 aa).

The interval 53–135 (MSEKSGQSVT…KRRSKTATDS (83 aa)) is disordered. Over residues 56–92 (KSGQSVTEECTSHTQEPMDTSSSTATPLRETSGQSSE) the composition is skewed to polar residues. Residues 93–103 (DGQRSGLEGHP) are compositionally biased toward basic and acidic residues.

It belongs to the IER family. In terms of assembly, interacts with FIBPB.

It is found in the nucleus. The protein localises to the cytoplasm. Its function is as follows. DNA-binding protein that seems to act as a transcription factor. Mediates with FIBPB FGF-signaling in Kupffer's vesicle ciliogenesis and in the establishment of laterality in the embryo. The chain is Immediate early response gene 2 protein from Danio rerio (Zebrafish).